We begin with the raw amino-acid sequence, 82 residues long: Putative antitoxin Saci_0468 (82 aa).

This sequence belongs to the UPF0330 family.

Functionally, possibly the antitoxin component of a type II toxin-antitoxin (TA) system. This is Putative antitoxin Saci_0468 from Sulfolobus acidocaldarius (strain ATCC 33909 / DSM 639 / JCM 8929 / NBRC 15157 / NCIMB 11770).